A 425-amino-acid chain; its full sequence is NAD kinase 2, mitochondrial (425 aa).

The transit peptide at 1 to 45 directs the protein to the mitochondrion; sequence MDTSAIQQTLVKIYQRQAWQPPRKASKNETTVGKPRELAGGGSPA. The disordered stretch occupies residues 20-46; sequence QPPRKASKNETTVGKPRELAGGGSPAD. Lys59 bears the N6-acetyllysine; alternate mark. At Lys59 the chain carries N6-succinyllysine; alternate. Position 171 is a phosphoserine (Ser171). Lys285 bears the N6-succinyllysine mark. Lys300 carries the N6-acetyllysine; alternate modification. At Lys300 the chain carries N6-succinyllysine; alternate. Ser350 is modified (phosphoserine). The residue at position 380 (Lys380) is an N6-acetyllysine.

Belongs to the NAD kinase family. As to quaternary structure, homodimer.

The protein localises to the mitochondrion. The catalysed reaction is NAD(+) + ATP = ADP + NADP(+) + H(+). With respect to regulation, inhibited by NADH, NADPH and NADP(+). Mitochondrial NAD(+) kinase that phosphorylates NAD(+) to yield NADP(+). Can use both ATP or inorganic polyphosphate as the phosphoryl donor. This chain is NAD kinase 2, mitochondrial (Nadk2), found in Rattus norvegicus (Rat).